Reading from the N-terminus, the 528-residue chain is PC4 and SFRS1-interacting protein (528 aa).

The region spanning Pro7–Asn64 is the PWWP domain. Residue Lys75 forms a Glycyl lysine isopeptide (Lys-Gly) (interchain with G-Cter in SUMO2) linkage. The segment at Asn86–Asp347 is disordered. Polar residues predominate over residues Phe92–Ser106. 3 positions are modified to phosphoserine: Ser102, Ser105, and Ser106. Over residues Lys113–Lys135 the composition is skewed to basic and acidic residues. A phosphothreonine mark is found at Thr115 and Thr122. Ser129 is modified (phosphoserine). Thr141 bears the Phosphothreonine mark. The span at Ala144–Ala153 shows a compositional bias: basic residues. Residues Arg146 to Gln156 carry the Nuclear localization signal motif. Phosphoserine occurs at positions 176 and 205. Residues Asp212–Arg260 show a composition bias toward basic and acidic residues. Phosphoserine is present on Ser270. At Thr271 the chain carries Phosphothreonine. Ser272 and Ser274 each carry phosphoserine. Basic residues predominate over residues Lys285–Met300. Residues Gly303–Asp347 are compositionally biased toward basic and acidic residues. 2 coiled-coil regions span residues Gln304–Lys332 and Asn369–Glu393. Positions Val338–Thr415 are integrase-binding domain (IBD). The residue at position 432 (Ser432) is a Phosphoserine. Thr435 is subject to Phosphothreonine. A Phosphoserine modification is found at Ser441. Basic and acidic residues predominate over residues Glu444 to Thr471. A disordered region spans residues Glu444 to Asn528. Positions Gly472 to Gly492 are enriched in polar residues. Residues Glu496 to Asn528 show a composition bias toward basic and acidic residues. The residue at position 515 (Arg515) is a Citrulline. At Ser520 the chain carries Phosphoserine. A Phosphothreonine modification is found at Thr525.

It belongs to the HDGF family. In terms of assembly, monomer. Interacts with IFRD1/PC4. Interacts (via IBD domain) with POGZ (via IBM motif) and CDCA7L (via IBM motifs). Interacts (via IBD domain) with KMT2A (via IBM motifs) with a moderate affinity whereas interacts with the KMT2A-MEN1 complex with a greater affinity; MEN1 enhances interaction of KMT2A with PSIP1. Interacts (via IBD domain) with IWS1 (via IBM motif), MED1 (via IBM motif) and DBF4 (via IBM motifs). Post-translationally, citrullinated by PADI4.

Its subcellular location is the nucleus. In terms of biological role, transcriptional coactivator involved in neuroepithelial stem cell differentiation and neurogenesis. Involved in particular in lens epithelial cell gene regulation and stress responses. May play an important role in lens epithelial to fiber cell terminal differentiation. May play a protective role during stress-induced apoptosis. The protein is PC4 and SFRS1-interacting protein (Psip1) of Rattus norvegicus (Rat).